The sequence spans 269 residues: HTH-type transcriptional activator ArnR (269 aa).

At 1 to 218 (MTKSLFDVLK…LLRLTNSYTL (218 aa)) the chain is on the cytoplasmic side. A DNA-binding region (H-T-H motif) is located at residues 39 to 62 (TTEISQTINTSRKSIIDAIRKLVD). The chain crosses the membrane as a helical span at residues 219 to 239 (EMANVKVMGFILISLPLLMYF). Residues 240–242 (RDQ) lie on the Extracellular side of the membrane. Residues 243–263 (LGLIELPWLYAVIFLALLSVF) traverse the membrane as a helical segment. Over 264–269 (AQILSR) the chain is Cytoplasmic.

Its subcellular location is the cell membrane. Functionally, involved in regulation of archaellar gene expression. Activates flaB transcription upon nutrient starvation by acting on the flaB promoter. This is HTH-type transcriptional activator ArnR from Sulfolobus acidocaldarius (strain ATCC 33909 / DSM 639 / JCM 8929 / NBRC 15157 / NCIMB 11770).